A 433-amino-acid polypeptide reads, in one-letter code: MELKIVSSEIIKPSSPTPQHLRTHKLSVLDQVAGDSLFPVILFYPQACSNDTTKTSDHLKKSLSETLSKYHPFAGRFKDAFSIDCDDSGAVFVEACVAGEMSEILKQPKNDLLEELMPYKLNEKPSVPVNLAAKVTYFGCGGMALCVCFSHVIADITTAANFIKSWVAISRGFSTSNDIPDTFFDCSTVFPPQDFSSFSRNAFADNHSQSAEIITKRFTFDGVKLADLKEKIRKESSSGYQPTRVEAVSAVILGGIMSAEKEGEKFNHTNLVPSVSVNLRNRTNPPLPELSIGNIIQAAITKLPIEKRINYSKLTEQLHGSIRSIDDEYLKKFHAVGEFMNNMQNALIALFDPNNRGFTISSWCRRPLYEADFGWGKPIWVSTAMKHKDVAVLLDSNDGKGIEALVALPKKEMDKFEQDPGILAYASVDTSII.

Catalysis depends on proton acceptor residues H151 and D372.

The protein belongs to the plant acyltransferase family. In terms of assembly, monomer. In terms of tissue distribution, mainly expressed in petioles and, to a lower extent, in roots.

It carries out the reaction (21S)-21-acetyl-1-hydroxy-apo-melianone + acetyl-CoA = epi-neemfruitin B + acetate + CoA + H(+). It participates in secondary metabolite biosynthesis; terpenoid biosynthesis. Acetyltransferase involved in the biosynthesis of limonoids triterpene natural products such as azadirachtin, an antifeedant widely used as bioinsecticide, and possessing many medicinal applications including anti-tumoral, anti-malarial, anti-rheumatic, antibacterial, anti-inflammatory, anti-pyretic and diuretic effects. Catalyzes the formation of epi-neemfruitin B from (21S)-21-acetyl-1-hydroxy-apo-melianone. The protein is Epi-neemfruitin B synthase L1AT of Melia azedarach (Chinaberry tree).